We begin with the raw amino-acid sequence, 220 residues long: Artemin (220 aa).

The N-terminal stretch at 1-39 is a signal peptide; the sequence is MELGLGGLSTLSHCPWPRQQPALWPTLAALALLSSVAEA. Residues 40–107 constitute a propeptide that is removed on maturation; that stretch reads SLGSAPRSPA…ALPRGGRAAR (68 aa). Residues 41–121 form a disordered region; the sequence is LGSAPRSPAP…GSRARAAGAR (81 aa). Pro residues-rich tracts occupy residues 47–58 and 81–98; these read SPAPREGPPPVL and PPPQ…PPSA. Residues 99–121 are compositionally biased toward low complexity; it reads LPRGGRAARAGGPGSRARAAGAR. 3 disulfides stabilise this stretch: cysteine 123–cysteine 188, cysteine 150–cysteine 216, and cysteine 154–cysteine 218. Asparagine 202 carries N-linked (GlcNAc...) asparagine glycosylation.

This sequence belongs to the TGF-beta family. GDNF subfamily. In terms of assembly, homodimer; disulfide-linked. Interacts with GFRA3 coreceptor and RET: forms a 2:2:2 ternary complex composed of ARTN ligand, GFRA3 and RET receptor. As to expression, ubiquitous. Expressed at high levels in peripheral tissues including prostate, placenta, pancreas, heart, kidney, pituitary gland, lung and testis. Expressed at low levels in the brain.

It localises to the secreted. In terms of biological role, growth factor that supports the survival of sensory and sympathetic peripheral neurons in culture and also supports the survival of dopaminergic neurons of the ventral mid-brain. Acts by binding to its coreceptor, GFRA3, leading to autophosphorylation and activation of the RET receptor. Strong attractant of gut hematopoietic cells thus promoting the formation Peyer's patch-like structures, a major component of the gut-associated lymphoid tissue. The protein is Artemin of Homo sapiens (Human).